We begin with the raw amino-acid sequence, 419 residues long: Cell division protein FtsZ (419 aa).

GTP is bound by residues 22–26 (GGGGN), 109–111 (GSG), Glu140, Arg144, and Asp188. Residues 397–419 (ERFEAPISQDEDELDTPPFFKNR) are disordered.

It belongs to the FtsZ family. As to quaternary structure, homodimer. Polymerizes to form a dynamic ring structure in a strictly GTP-dependent manner. Interacts directly with several other division proteins. Interacts with CcrZ; the interaction is direct.

The protein resides in the cytoplasm. Functionally, essential cell division protein that forms a contractile ring structure (Z ring) at the future cell division site. The regulation of the ring assembly controls the timing and the location of cell division. One of the functions of the FtsZ ring is to recruit other cell division proteins to the septum to produce a new cell wall between the dividing cells. Binds GTP and shows GTPase activity. This Streptococcus pneumoniae serotype 2 (strain D39 / NCTC 7466) protein is Cell division protein FtsZ.